The primary structure comprises 401 residues: tRNA pseudouridine synthase Pus10 (401 aa).

One can recognise a THUMP domain in the interval 64 to 195; the sequence is ALAKSGHRES…DGSVSVEVMP (132 aa).

The protein belongs to the pseudouridine synthase Pus10 family.

It carries out the reaction uridine(54) in tRNA = pseudouridine(54) in tRNA. It catalyses the reaction uridine(55) in tRNA = pseudouridine(55) in tRNA. Functionally, responsible for synthesis of pseudouridine from uracil-54 and uracil-55 in the psi GC loop of transfer RNAs. The polypeptide is tRNA pseudouridine synthase Pus10 (Caldivirga maquilingensis (strain ATCC 700844 / DSM 13496 / JCM 10307 / IC-167)).